A 595-amino-acid chain; its full sequence is MRSHYCGELSEAHLDQSVTLCGWVNRRRDHGGVIFIDLRDREGLIQLVFDPEYSPESFRHAEQIRSEYVLQVKGRVQHRPEGTENPDLKTGQVEVLGQELILLNASETPPFPVDEKLEVGEDIRLRYRYIDLRRPESLQRLRFRSAIIRQLRKFLDERGFLDIDTPILTQSTPEGARDFLVPSRTHPGQFFALPQSPQLFKQLLMVAGVDRYYQVVRCFRDEDLRADRQPEFTQLDIEASFLHEETLMALMEEMFKELFATVLEVPLHTPFVRMPYAEALACFGLDKPDLRIPLRLVEVGDLMKTVDFKVFAQPAQDRDGRVAALRLPGGGKLSRKEIEEYTQFVAIYGAKGLAYIKVVERSRGREGLQSPILKFLPDEVIGAMLERTEAENGDIVFFGADKASIVNESLGALRVKLGHDHGLVEHGWSPLWVIDFPMFEWDEDDHRWHALHHPFTSPKEEDLSLLEQNPGACRSRAYDLVLNGTEVGGGSIRISQSQVQSQVFRLLGIGDEEAQDKFGFLLDALKYGCPPHGGIAFGLDRLVMLMTGSASIREVIPFPKTQTAACPLTGAPGQVAEAQLRELGIGVRRLASDKV.

Glu-174 is a binding site for L-aspartate. Residues 198–201 (QLFK) form an aspartate region. Residue Arg-220 coordinates L-aspartate. ATP is bound by residues 220–222 (RDE) and Gln-229. His-452 lines the L-aspartate pocket. ATP is bound at residue Glu-486. Residue Arg-493 coordinates L-aspartate. 538–541 (GLDR) is a binding site for ATP.

The protein belongs to the class-II aminoacyl-tRNA synthetase family. Type 1 subfamily. As to quaternary structure, homodimer.

Its subcellular location is the cytoplasm. It catalyses the reaction tRNA(Asx) + L-aspartate + ATP = L-aspartyl-tRNA(Asx) + AMP + diphosphate. Functionally, aspartyl-tRNA synthetase with relaxed tRNA specificity since it is able to aspartylate not only its cognate tRNA(Asp) but also tRNA(Asn). Reaction proceeds in two steps: L-aspartate is first activated by ATP to form Asp-AMP and then transferred to the acceptor end of tRNA(Asp/Asn). This chain is Aspartate--tRNA(Asp/Asn) ligase, found in Nitrosococcus oceani (strain ATCC 19707 / BCRC 17464 / JCM 30415 / NCIMB 11848 / C-107).